A 119-amino-acid polypeptide reads, in one-letter code: Large ribosomal subunit protein bL19 (119 aa).

This sequence belongs to the bacterial ribosomal protein bL19 family.

Its function is as follows. This protein is located at the 30S-50S ribosomal subunit interface and may play a role in the structure and function of the aminoacyl-tRNA binding site. This chain is Large ribosomal subunit protein bL19, found in Pseudoalteromonas atlantica (strain T6c / ATCC BAA-1087).